The sequence spans 369 residues: 1-aminocyclopropane-1-carboxylate oxidase homolog 3 (369 aa).

The Fe2OG dioxygenase domain maps to 217-318 (KGLLMLSHYY…VSVACFFTTG (102 aa)). The Fe cation site is built by histidine 241, aspartate 243, and histidine 297.

The protein belongs to the iron/ascorbate-dependent oxidoreductase family. Requires Fe cation as cofactor.

The chain is 1-aminocyclopropane-1-carboxylate oxidase homolog 3 from Arabidopsis thaliana (Mouse-ear cress).